A 349-amino-acid chain; its full sequence is Fructose-1,6-bisphosphatase class 1 (349 aa).

Residues glutamate 91, aspartate 110, leucine 112, and aspartate 113 each contribute to the Mg(2+) site. Substrate contacts are provided by residues aspartate 113 to serine 116 and asparagine 205. Residue glutamate 277 participates in Mg(2+) binding.

The protein belongs to the FBPase class 1 family. In terms of assembly, homotetramer. Requires Mg(2+) as cofactor.

Its subcellular location is the cytoplasm. It carries out the reaction beta-D-fructose 1,6-bisphosphate + H2O = beta-D-fructose 6-phosphate + phosphate. Its pathway is carbohydrate biosynthesis; gluconeogenesis. This Sinorhizobium medicae (strain WSM419) (Ensifer medicae) protein is Fructose-1,6-bisphosphatase class 1.